Consider the following 472-residue polypeptide: Protein DML1 (472 aa).

Residues 441–463 show a composition bias toward basic and acidic residues; sequence GDEREEMKQELGDMASKYEHGWE. Positions 441-472 are disordered; that stretch reads GDEREEMKQELGDMASKYEHGWEEESDDDDDY.

The protein belongs to the misato family.

The protein localises to the mitochondrion. In terms of biological role, involved in the partitioning of the mitochondrial organelle and mitochondrial DNA (mtDNA) inheritance. In Yarrowia lipolytica (strain CLIB 122 / E 150) (Yeast), this protein is Protein DML1 (DML1).